Consider the following 307-residue polypeptide: Protoheme IX farnesyltransferase (307 aa).

8 helical membrane passes run Met32–Phe52, Phe65–Ile85, Pro108–Leu128, Pro131–Trp151, Leu158–Ile178, Ile186–Ala206, Leu251–Phe271, and Phe287–Phe307.

The protein belongs to the UbiA prenyltransferase family. Protoheme IX farnesyltransferase subfamily. As to quaternary structure, interacts with CtaA.

It is found in the cell membrane. It carries out the reaction heme b + (2E,6E)-farnesyl diphosphate + H2O = Fe(II)-heme o + diphosphate. The protein operates within porphyrin-containing compound metabolism; heme O biosynthesis; heme O from protoheme: step 1/1. Converts heme B (protoheme IX) to heme O by substitution of the vinyl group on carbon 2 of heme B porphyrin ring with a hydroxyethyl farnesyl side group. The chain is Protoheme IX farnesyltransferase from Bacillus anthracis (strain A0248).